The sequence spans 240 residues: Nicotinamide riboside kinase (240 aa).

Residue 13–21 (GCSSSGKTT) participates in ATP binding. T20 and D39 together coordinate Mg(2+). Catalysis depends on D39, which acts as the Proton acceptor. Residues 39-42 (DDFY) and 59-60 (WD) each bind substrate. ATP is bound at residue R158. Substrate is bound by residues R159 and 164–165 (GY). Residues 162 to 164 (RKG) and 208 to 210 (KSK) each bind ATP.

Belongs to the uridine kinase family. NRK subfamily.

The enzyme catalyses beta-nicotinamide D-riboside + ATP = beta-nicotinamide D-ribonucleotide + ADP + H(+). It catalyses the reaction beta-D-ribosylnicotinate + ATP = nicotinate beta-D-ribonucleotide + ADP + H(+). It functions in the pathway cofactor biosynthesis; NAD(+) biosynthesis. In terms of biological role, catalyzes the phosphorylation of nicotinamide riboside (NR) and nicotinic acid riboside (NaR) to form nicotinamide mononucleotide (NMN) and nicotinic acid mononucleotide (NaMN). This is Nicotinamide riboside kinase (NRK1) from Saccharomyces cerevisiae (strain ATCC 204508 / S288c) (Baker's yeast).